Reading from the N-terminus, the 690-residue chain is Protein arginine N-methyltransferase 7 (690 aa).

SAM-dependent MTase PRMT-type domains lie at phenylalanine 5–tryptophan 355 and lysine 364–glutamine 690.

Belongs to the class I-like SAM-binding methyltransferase superfamily. Protein arginine N-methyltransferase family. PRMT7 subfamily.

Functionally, essential arginine methyltransferase that can both catalyze the formation of omega-N monomethylarginine (MMA) and symmetrical dimethylarginine (sDMA). Specifically mediates the symmetrical dimethylation of arginine residues in the small nuclear ribonucleoproteins SmD1 and SmD3. This Anopheles gambiae (African malaria mosquito) protein is Protein arginine N-methyltransferase 7 (Art7).